The primary structure comprises 303 residues: tRNA-cytidine(32) 2-sulfurtransferase (303 aa).

The short motif at 49–54 (SGGKDS) is the PP-loop motif element. 3 residues coordinate [4Fe-4S] cluster: Cys124, Cys127, and Cys215.

It belongs to the TtcA family. Homodimer. Mg(2+) is required as a cofactor. Requires [4Fe-4S] cluster as cofactor.

It is found in the cytoplasm. It catalyses the reaction cytidine(32) in tRNA + S-sulfanyl-L-cysteinyl-[cysteine desulfurase] + AH2 + ATP = 2-thiocytidine(32) in tRNA + L-cysteinyl-[cysteine desulfurase] + A + AMP + diphosphate + H(+). The protein operates within tRNA modification. Functionally, catalyzes the ATP-dependent 2-thiolation of cytidine in position 32 of tRNA, to form 2-thiocytidine (s(2)C32). The sulfur atoms are provided by the cysteine/cysteine desulfurase (IscS) system. In Anaeromyxobacter sp. (strain Fw109-5), this protein is tRNA-cytidine(32) 2-sulfurtransferase.